We begin with the raw amino-acid sequence, 255 residues long: Ribonuclease PH (255 aa).

Phosphate contacts are provided by residues Arg-86 and 124–126; that span reads GTR.

Belongs to the RNase PH family. In terms of assembly, homohexameric ring arranged as a trimer of dimers.

It carries out the reaction tRNA(n+1) + phosphate = tRNA(n) + a ribonucleoside 5'-diphosphate. Phosphorolytic 3'-5' exoribonuclease that plays an important role in tRNA 3'-end maturation. Removes nucleotide residues following the 3'-CCA terminus of tRNAs; can also add nucleotides to the ends of RNA molecules by using nucleoside diphosphates as substrates, but this may not be physiologically important. Probably plays a role in initiation of 16S rRNA degradation (leading to ribosome degradation) during starvation. This chain is Ribonuclease PH, found in Aquifex aeolicus (strain VF5).